Here is a 566-residue protein sequence, read N- to C-terminus: NAD-dependent malic enzyme 3 (566 aa).

Tyrosine 105 functions as the Proton donor in the catalytic mechanism. Lysine 178 (proton acceptor) is an active-site residue. Glutamate 249, aspartate 250, and aspartate 273 together coordinate a divalent metal cation. NAD(+) is bound by residues 306 to 309 (AGTA), asparagine 423, and asparagine 468.

This sequence belongs to the malic enzymes family. It depends on Mg(2+) as a cofactor. Mn(2+) serves as cofactor.

The catalysed reaction is (S)-malate + NAD(+) = pyruvate + CO2 + NADH. It catalyses the reaction oxaloacetate + H(+) = pyruvate + CO2. Catalyzes the decarboxylation of malate to pyruvate. Can use NAD and NADP, but with a strong preference for NAD. Can also catalyze the decarboxylation of oxaloacetate. Involved in keeping the ATP levels high. In Bacillus subtilis (strain 168), this protein is NAD-dependent malic enzyme 3 (malS).